We begin with the raw amino-acid sequence, 469 residues long: Glutamate--tRNA ligase (469 aa).

Positions 11 to 21 (PSPTGFIHLGN) match the 'HIGH' region motif. The 'KMSKS' region motif lies at 243–247 (KMSKR). Lysine 246 is an ATP binding site.

The protein belongs to the class-I aminoacyl-tRNA synthetase family. Glutamate--tRNA ligase type 1 subfamily. As to quaternary structure, monomer.

Its subcellular location is the cytoplasm. The catalysed reaction is tRNA(Glu) + L-glutamate + ATP = L-glutamyl-tRNA(Glu) + AMP + diphosphate. Functionally, catalyzes the attachment of glutamate to tRNA(Glu) in a two-step reaction: glutamate is first activated by ATP to form Glu-AMP and then transferred to the acceptor end of tRNA(Glu). The protein is Glutamate--tRNA ligase of Burkholderia orbicola (strain AU 1054).